Here is a 197-residue protein sequence, read N- to C-terminus: Nucleoid occlusion factor SlmA (197 aa).

An HTH tetR-type domain is found at 7–67; it reads INRREHILQC…GLIDFIEESL (61 aa). The H-T-H motif DNA-binding region spans 30–49; that stretch reads TTAKLAAEVGVSEAALYRHF.

It belongs to the nucleoid occlusion factor SlmA family. Homodimer. Interacts with FtsZ.

It is found in the cytoplasm. The protein resides in the nucleoid. In terms of biological role, required for nucleoid occlusion (NO) phenomenon, which prevents Z-ring formation and cell division over the nucleoid. Acts as a DNA-associated cell division inhibitor that binds simultaneously chromosomal DNA and FtsZ, and disrupts the assembly of FtsZ polymers. SlmA-DNA-binding sequences (SBS) are dispersed on non-Ter regions of the chromosome, preventing FtsZ polymerization at these regions. This chain is Nucleoid occlusion factor SlmA, found in Shewanella sediminis (strain HAW-EB3).